The chain runs to 233 residues: Orotidine 5'-phosphate decarboxylase (233 aa).

Residues D11, K34, D61–T70, T117, R179, Q189, G209, and R210 each bind substrate. K63 acts as the Proton donor in catalysis.

It belongs to the OMP decarboxylase family. Type 1 subfamily. Homodimer.

The catalysed reaction is orotidine 5'-phosphate + H(+) = UMP + CO2. It participates in pyrimidine metabolism; UMP biosynthesis via de novo pathway; UMP from orotate: step 2/2. Functionally, catalyzes the decarboxylation of orotidine 5'-monophosphate (OMP) to uridine 5'-monophosphate (UMP). The polypeptide is Orotidine 5'-phosphate decarboxylase (Streptococcus agalactiae serotype Ia (strain ATCC 27591 / A909 / CDC SS700)).